Here is a 152-residue protein sequence, read N- to C-terminus: Histone deacetylase complex subunit SAP18 (152 aa).

Positions 1–38 are disordered; the sequence is MAEAARRQGGGRPLPPPPRGVNQQPPRPKPEPVDREKT. Over residues 28–38 the composition is skewed to basic and acidic residues; that stretch reads PKPEPVDREKT.

The protein belongs to the SAP18 family. In terms of assembly, interacts with SIN3, ERF3, ERF4 and HDA19. Ubiquitous, with low level in flowers.

In terms of biological role, links the histone deacetylase complex to transcriptional repressors bound to chromatin. Involved in the tethering of the SIN3 complex to core histone proteins. In Arabidopsis thaliana (Mouse-ear cress), this protein is Histone deacetylase complex subunit SAP18.